A 252-amino-acid polypeptide reads, in one-letter code: Hydroxyacylglutathione hydrolase (252 aa).

His54, His56, Asp58, His59, His111, Asp128, and His166 together coordinate Zn(2+).

The protein belongs to the metallo-beta-lactamase superfamily. Glyoxalase II family. In terms of assembly, monomer. The cofactor is Zn(2+).

It catalyses the reaction an S-(2-hydroxyacyl)glutathione + H2O = a 2-hydroxy carboxylate + glutathione + H(+). It participates in secondary metabolite metabolism; methylglyoxal degradation; (R)-lactate from methylglyoxal: step 2/2. Its function is as follows. Thiolesterase that catalyzes the hydrolysis of S-D-lactoyl-glutathione to form glutathione and D-lactic acid. The polypeptide is Hydroxyacylglutathione hydrolase (Aliivibrio fischeri (strain ATCC 700601 / ES114) (Vibrio fischeri)).